Consider the following 459-residue polypeptide: N-chimaerin (459 aa).

Ala-2 is subject to N-acetylalanine. One can recognise an SH2 domain in the interval 49-135; that stretch reads EYHGMISREE…IETKAAEYIA (87 aa). Position 192 is a phosphothreonine (Thr-192). Residues 205-255 form a Phorbol-ester/DAG-type zinc finger; it reads VHNFKVHTFRGPHWCEYCANFMWGLIAQGVKCADCGLNVHKQCSKMVPNDC. A Rho-GAP domain is found at 268–459; it reads CDLTTLVKAH…LLIKNEDILF (192 aa). Residue Thr-340 is modified to Phosphothreonine.

Interacts with EPHA4; effector of EPHA4 in axon guidance linking EPHA4 activation to RAC1 regulation. May also interact with EPHB1 and EPHB2. Phosphorylated. Phosphorylation is EPHA4 kinase activity-dependent.

Its function is as follows. GTPase-activating protein for p21-rac and a phorbol ester receptor. May play an important role in neuronal signal-transduction mechanisms. Involved in the assembly of neuronal locomotor circuits as a direct effector of EPHA4 in axon guidance. The chain is N-chimaerin (Chn1) from Mus musculus (Mouse).